A 164-amino-acid polypeptide reads, in one-letter code: Hoefavidin (164 aa).

The first 22 residues, 1–22 (MNKVLAIVLTITVAGFAQTAFA), serve as a signal peptide directing secretion. The region spanning 32–155 (KLLAGASNWV…GQDDFMQSVA (124 aa)) is the Avidin-like domain. Residues Asn42, Ser46, Tyr68, Asn70, and Gly76 each contribute to the biotin site. Cysteines 77 and 108 form a disulfide. Residues Ser110, Thr112, and Asp148 each contribute to the biotin site.

This sequence belongs to the avidin/streptavidin family. As to quaternary structure, exhibits a dynamic oligomeric assembly: the apo form exits as homooctamers, which dissociate into homodimers upon biotin binding. The X-ray structure of the intact hoefavidin reveals unique crystal packing generated by an octameric cylindrical structure wherein the C-terminal segments of each monomer are introduced into the entrance of the biotin-binding site of an adjacent non-canonical monomer.

Its subcellular location is the secreted. Its function is as follows. The exact role played by hoefavidin in the host organism is still obscure. Forms a strong non-covalent complex with biotin and 2-iminobiotin. In Hoeflea phototrophica (strain DSM 17068 / NCIMB 14078 / DFL-43), this protein is Hoefavidin.